The chain runs to 135 residues: DNA-directed RNA polymerase subunit omega (135 aa).

Residues 84-106 (IAGHSSHVSPSRSSRHTGLGKSF) are disordered.

This sequence belongs to the RNA polymerase subunit omega family. The RNAP catalytic core consists of 2 alpha, 1 beta, 1 beta' and 1 omega subunit. When a sigma factor is associated with the core the holoenzyme is formed, which can initiate transcription.

It catalyses the reaction RNA(n) + a ribonucleoside 5'-triphosphate = RNA(n+1) + diphosphate. In terms of biological role, promotes RNA polymerase assembly. Latches the N- and C-terminal regions of the beta' subunit thereby facilitating its interaction with the beta and alpha subunits. This is DNA-directed RNA polymerase subunit omega from Anaplasma phagocytophilum (strain HZ).